The primary structure comprises 100 residues: MARMKHTARMSTGGKAPRKQLASKALRKAPPPPTKGVKQPTTTTSGKWRFARFHRKLPFQGLVRKIWQDLKTHLRFKNHSVPPLEEVTEVYPCQTIGGCY.

Positions 1–46 (MARMKHTARMSTGGKAPRKQLASKALRKAPPPPTKGVKQPTTTTSG) are disordered.

It belongs to the histone H3 family. In terms of assembly, the nucleosome is a histone octamer containing two molecules each of H2A, H2B, H3 and H4 assembled in one H3-H4 heterotetramer and two H2A-H2B heterodimers. The octamer wraps approximately 147 bp of DNA. As to expression, pollen specific.

The protein resides in the nucleus. It is found in the chromosome. Its function is as follows. Core component of nucleosome. Nucleosomes wrap and compact DNA into chromatin, limiting DNA accessibility to the cellular machineries which require DNA as a template. Histones thereby play a central role in transcription regulation, DNA repair, DNA replication and chromosomal stability. DNA accessibility is regulated via a complex set of post-translational modifications of histones, also called histone code, and nucleosome remodeling. The chain is Histone H3-like 2 (gcH3) from Lilium longiflorum (Trumpet lily).